Consider the following 401-residue polypeptide: uncharacterized protein (401 aa).

Helical transmembrane passes span 44-64 (LKYTIVYILALVNAFFLLVFI), 69-89 (LYSFGISSLTQGFARLLFVLL), 99-119 (LVFNIFYWLFYVIVNIPLIIF), 130-150 (ILSTHYVVASNVFGFIFSIIP), 201-221 (FIYAGIYGFVNGTSLAILYIL), 246-266 (ILFYVNTFILIIAILMGSFVA), and 286-306 (LFFSPNLIATFFSVLFTGTVV).

It localises to the cell membrane. This is an uncharacterized protein from Mycoplasma pneumoniae (strain ATCC 29342 / M129 / Subtype 1) (Mycoplasmoides pneumoniae).